The chain runs to 252 residues: tRNA pseudouridine synthase A (252 aa).

Catalysis depends on D52, which acts as the Nucleophile. Y111 is a substrate binding site.

It belongs to the tRNA pseudouridine synthase TruA family. Homodimer.

It catalyses the reaction uridine(38/39/40) in tRNA = pseudouridine(38/39/40) in tRNA. In terms of biological role, formation of pseudouridine at positions 38, 39 and 40 in the anticodon stem and loop of transfer RNAs. The protein is tRNA pseudouridine synthase A of Methylorubrum populi (strain ATCC BAA-705 / NCIMB 13946 / BJ001) (Methylobacterium populi).